The chain runs to 166 residues: ATP synthase subunit b (166 aa).

A helical transmembrane segment spans residues 15–37; the sequence is TLYYLLIFAALLLLVKHFAWGPV.

It belongs to the ATPase B chain family. As to quaternary structure, F-type ATPases have 2 components, F(1) - the catalytic core - and F(0) - the membrane proton channel. F(1) has five subunits: alpha(3), beta(3), gamma(1), delta(1), epsilon(1). F(0) has three main subunits: a(1), b(2) and c(10-14). The alpha and beta chains form an alternating ring which encloses part of the gamma chain. F(1) is attached to F(0) by a central stalk formed by the gamma and epsilon chains, while a peripheral stalk is formed by the delta and b chains.

It is found in the cell membrane. In terms of biological role, f(1)F(0) ATP synthase produces ATP from ADP in the presence of a proton or sodium gradient. F-type ATPases consist of two structural domains, F(1) containing the extramembraneous catalytic core and F(0) containing the membrane proton channel, linked together by a central stalk and a peripheral stalk. During catalysis, ATP synthesis in the catalytic domain of F(1) is coupled via a rotary mechanism of the central stalk subunits to proton translocation. Component of the F(0) channel, it forms part of the peripheral stalk, linking F(1) to F(0). This Lactobacillus gasseri (strain ATCC 33323 / DSM 20243 / BCRC 14619 / CIP 102991 / JCM 1131 / KCTC 3163 / NCIMB 11718 / NCTC 13722 / AM63) protein is ATP synthase subunit b.